A 321-amino-acid polypeptide reads, in one-letter code: Transaldolase (321 aa).

Lysine 132 (schiff-base intermediate with substrate) is an active-site residue.

It belongs to the transaldolase family. Type 1 subfamily. As to quaternary structure, homodimer.

The protein localises to the cytoplasm. It catalyses the reaction D-sedoheptulose 7-phosphate + D-glyceraldehyde 3-phosphate = D-erythrose 4-phosphate + beta-D-fructose 6-phosphate. It participates in carbohydrate degradation; pentose phosphate pathway; D-glyceraldehyde 3-phosphate and beta-D-fructose 6-phosphate from D-ribose 5-phosphate and D-xylulose 5-phosphate (non-oxidative stage): step 2/3. Functionally, transaldolase is important for the balance of metabolites in the pentose-phosphate pathway. This is Transaldolase from Agrobacterium fabrum (strain C58 / ATCC 33970) (Agrobacterium tumefaciens (strain C58)).